We begin with the raw amino-acid sequence, 220 residues long: Deoxyribose-phosphate aldolase (220 aa).

Catalysis depends on Asp-89, which acts as the Proton donor/acceptor. Lys-151 (schiff-base intermediate with acetaldehyde) is an active-site residue. Catalysis depends on Lys-180, which acts as the Proton donor/acceptor.

Belongs to the DeoC/FbaB aldolase family. DeoC type 1 subfamily.

It is found in the cytoplasm. It catalyses the reaction 2-deoxy-D-ribose 5-phosphate = D-glyceraldehyde 3-phosphate + acetaldehyde. It participates in carbohydrate degradation; 2-deoxy-D-ribose 1-phosphate degradation; D-glyceraldehyde 3-phosphate and acetaldehyde from 2-deoxy-alpha-D-ribose 1-phosphate: step 2/2. Catalyzes a reversible aldol reaction between acetaldehyde and D-glyceraldehyde 3-phosphate to generate 2-deoxy-D-ribose 5-phosphate. The polypeptide is Deoxyribose-phosphate aldolase (Streptococcus uberis (strain ATCC BAA-854 / 0140J)).